The primary structure comprises 387 residues: Sedoheptulose-1,7-bisphosphatase, chloroplastic (387 aa).

Cys-109 and Cys-114 are disulfide-bonded. Residues Asp-120, Glu-149, Asp-170, Leu-172, and Asp-173 each coordinate Mg(2+). Residues 173 to 176, Tyr-284, and Lys-314 each bind substrate; that span reads DGSS. Mg(2+) is bound at residue Glu-320.

It belongs to the FBPase class 1 family. Homodimer. It depends on Mg(2+) as a cofactor.

The protein localises to the plastid. It localises to the chloroplast. The catalysed reaction is D-sedoheptulose 1,7-bisphosphate + H2O = D-sedoheptulose 7-phosphate + phosphate. It participates in carbohydrate biosynthesis; Calvin cycle. The polypeptide is Sedoheptulose-1,7-bisphosphatase, chloroplastic (Spinacia oleracea (Spinach)).